The chain runs to 259 residues: Thiazole synthase (259 aa).

K95 functions as the Schiff-base intermediate with DXP in the catalytic mechanism. Residues G156, 183–184, and 205–206 contribute to the 1-deoxy-D-xylulose 5-phosphate site; these read AG and NS.

The protein belongs to the ThiG family. In terms of assembly, homotetramer. Forms heterodimers with either ThiH or ThiS.

It is found in the cytoplasm. It carries out the reaction [ThiS sulfur-carrier protein]-C-terminal-Gly-aminoethanethioate + 2-iminoacetate + 1-deoxy-D-xylulose 5-phosphate = [ThiS sulfur-carrier protein]-C-terminal Gly-Gly + 2-[(2R,5Z)-2-carboxy-4-methylthiazol-5(2H)-ylidene]ethyl phosphate + 2 H2O + H(+). Its pathway is cofactor biosynthesis; thiamine diphosphate biosynthesis. Catalyzes the rearrangement of 1-deoxy-D-xylulose 5-phosphate (DXP) to produce the thiazole phosphate moiety of thiamine. Sulfur is provided by the thiocarboxylate moiety of the carrier protein ThiS. In vitro, sulfur can be provided by H(2)S. This Coxiella burnetii (strain CbuK_Q154) (Coxiella burnetii (strain Q154)) protein is Thiazole synthase.